The sequence spans 157 residues: Pyruvoyl-dependent arginine decarboxylase (157 aa).

The residue at position 44 (Ser44) is a Pyruvic acid (Ser).

The protein belongs to the PdaD family. It depends on pyruvate as a cofactor.

The enzyme catalyses L-arginine + H(+) = agmatine + CO2. In Thermococcus kodakarensis (strain ATCC BAA-918 / JCM 12380 / KOD1) (Pyrococcus kodakaraensis (strain KOD1)), this protein is Pyruvoyl-dependent arginine decarboxylase.